Consider the following 302-residue polypeptide: Dehydrodolichyl diphosphate synthase 3 (302 aa).

It belongs to the UPP synthase family. It depends on Mg(2+) as a cofactor.

It participates in protein modification; protein glycosylation. Functionally, catalyzes cis-prenyl chain elongation to produce the polyprenyl backbone of dolichol, a glycosyl carrier-lipid required for the biosynthesis of several classes of glycoprotein. The chain is Dehydrodolichyl diphosphate synthase 3 from Arabidopsis thaliana (Mouse-ear cress).